Reading from the N-terminus, the 172-residue chain is MVKFLLIVLALGVSCAHHENLDISPSEVNGDWRTLYIVADNVEKVAEGGSLRAYFQHMECGDECQELKIIFNVKLDSECQTHTVVGQKHEDGRYTTDYSGRNYFHVLKKTDDIIFFHNVNVDESGRRQCDLVAGKREDLNKAQKQELRKLAEEYNIPNENTQHLVPTDTCNQ.

A signal peptide spans 1–15; it reads MVKFLLIVLALGVSC. Disulfide bonds link cysteine 60-cysteine 64 and cysteine 79-cysteine 170.

This sequence belongs to the calycin superfamily. Lipocalin family. Homodimer.

The protein localises to the secreted. Functionally, this protein is found in nasal epithelium and it binds a wide variety of chemical odorants. This is Odorant-binding protein (Obp1f) from Rattus norvegicus (Rat).